A 752-amino-acid chain; its full sequence is Photosystem I P700 chlorophyll a apoprotein A1 (752 aa).

The next 8 helical transmembrane spans lie at 73–96, 159–182, 198–222, 294–312, 349–372, 388–414, 436–458, and 533–551; these read IFSA…FHGA, LYAT…FHYH, MNHH…HISI, TAHH…GHMY, WHAQ…HHMY, LSLF…IFMV, AIIS…LYIH, and FMVH…LILV. [4Fe-4S] cluster contacts are provided by Cys575 and Cys584. Helical transmembrane passes span 591-612 and 666-688; these read HVFL…HFSW and LSAY…MFLF. His677 contacts chlorophyll a'. Chlorophyll a-binding residues include Met685 and Tyr693. Trp694 contacts phylloquinone. Residues 726–746 traverse the membrane as a helical segment; sequence AVGVAHYLLGGIGTTWAFFLA.

The protein belongs to the PsaA/PsaB family. In terms of assembly, the PsaA/B heterodimer binds the P700 chlorophyll special pair and subsequent electron acceptors. PSI consists of a core antenna complex that captures photons, and an electron transfer chain that converts photonic excitation into a charge separation. The eukaryotic PSI reaction center is composed of at least 11 subunits. P700 is a chlorophyll a/chlorophyll a' dimer, A0 is one or more chlorophyll a, A1 is one or both phylloquinones and FX is a shared 4Fe-4S iron-sulfur center. serves as cofactor.

It localises to the plastid. It is found in the chloroplast thylakoid membrane. It catalyses the reaction reduced [plastocyanin] + hnu + oxidized [2Fe-2S]-[ferredoxin] = oxidized [plastocyanin] + reduced [2Fe-2S]-[ferredoxin]. PsaA and PsaB bind P700, the primary electron donor of photosystem I (PSI), as well as the electron acceptors A0, A1 and FX. PSI is a plastocyanin/cytochrome c6-ferredoxin oxidoreductase, converting photonic excitation into a charge separation, which transfers an electron from the donor P700 chlorophyll pair to the spectroscopically characterized acceptors A0, A1, FX, FA and FB in turn. Oxidized P700 is reduced on the lumenal side of the thylakoid membrane by plastocyanin or cytochrome c6. This chain is Photosystem I P700 chlorophyll a apoprotein A1, found in Gracilaria tenuistipitata var. liui (Red alga).